Consider the following 150-residue polypeptide: Large ribosomal subunit protein bL9 (150 aa).

Belongs to the bacterial ribosomal protein bL9 family.

Functionally, binds to the 23S rRNA. The protein is Large ribosomal subunit protein bL9 of Shewanella baltica (strain OS223).